Reading from the N-terminus, the 1021-residue chain is Sodium/potassium-transporting ATPase subunit alpha-1 (1021 aa).

A propeptide spanning residues M1–V5 is cleaved from the precursor. The segment covering M1 to E11 has biased composition (basic and acidic residues). Residues M1–V37 form a disordered region. Residues G6 to P85 lie on the Cytoplasmic side of the membrane. Position 9 is an N6-acetyllysine (K9). Y10 carries the phosphotyrosine modification. S16 carries the phosphoserine; by PKC modification. Residue K21 is modified to N6-acetyllysine. Residues K26 to V37 are compositionally biased toward basic and acidic residues. Phosphoserine is present on residues S38 and S45. The phosphoinositide-3 kinase binding stretch occupies residues P80–P82. The chain crosses the membrane as a helical span at residues E86–A106. Residues I107 to Y129 are Extracellular-facing. Residues L130 to A150 traverse the membrane as a helical segment. The Cytoplasmic segment spans residues K151–I286. The disordered stretch occupies residues S214–N233. A Phosphoserine modification is found at S226. Position 258 is a phosphotyrosine (Y258). A helical membrane pass occupies residues E287–I306. The Extracellular portion of the chain corresponds to L307 to A318. A helical transmembrane segment spans residues V319–A336. The Cytoplasmic portion of the chain corresponds to T337 to L770. The active-site 4-aspartylphosphate intermediate is the D374. A phosphoserine mark is found at S450 and S482. ATP is bound at residue K485. Y540 is subject to Phosphotyrosine. The segment at R594–D715 is mediates interaction with SCN7A. N6-succinyllysine is present on K659. Phosphoserine is present on residues S666 and S673. Mg(2+)-binding residues include D715 and D719. The helical transmembrane segment at K771 to I790 threads the bilayer. Topologically, residues F791–L800 are extracellular. A helical membrane pass occupies residues G801–A821. At Y822–K841 the chain is on the cytoplasmic side. Residues L842–F864 traverse the membrane as a helical segment. The Extracellular segment spans residues F865–C916. Residues H917–K936 form a helical membrane-spanning segment. The Cytoplasmic portion of the chain corresponds to T937–N949. S941 carries the post-translational modification Phosphoserine; by PKA. A helical membrane pass occupies residues K950 to Y968. Over C969–P983 the chain is Extracellular. A helical membrane pass occupies residues T984–K1004. Over L1005–Y1021 the chain is Cytoplasmic.

Belongs to the cation transport ATPase (P-type) (TC 3.A.3) family. Type IIC subfamily. In terms of assembly, the sodium/potassium-transporting ATPase is composed of a catalytic alpha subunit, an auxiliary non-catalytic beta subunit and an additional regulatory subunit. Interacts with regulatory subunit FXYD1. Interacts with regulatory subunit FXYD3. Interacts with SIK1. Interacts with SLC35G1 and STIM1. Interacts with CLN3; this interaction regulates the sodium/potassium-transporting ATPase complex localization at the plasma membrane. Interacts with SCN7A; activates ATP1A1 P-type sodium:potassium-exchanging transporter activity which indirectly signals to nearby neurons to regulate sodium homeostasis. In terms of processing, phosphorylation on Tyr-10 modulates pumping activity. Phosphorylation of Ser-941 by PKA modulates the response of ATP1A1 to PKC. Dephosphorylation by protein phosphatase 2A (PP2A) following increases in intracellular sodium, leading to increase catalytic activity.

Its subcellular location is the cell membrane. It is found in the basolateral cell membrane. The protein localises to the sarcolemma. The protein resides in the cell projection. It localises to the axon. Its subcellular location is the melanosome. The catalysed reaction is K(+)(out) + Na(+)(in) + ATP + H2O = K(+)(in) + Na(+)(out) + ADP + phosphate + H(+). In terms of biological role, this is the catalytic component of the active enzyme, which catalyzes the hydrolysis of ATP coupled with the exchange of sodium and potassium ions across the plasma membrane. This action creates the electrochemical gradient of sodium and potassium ions, providing the energy for active transport of various nutrients. Could also be part of an osmosensory signaling pathway that senses body-fluid sodium levels and controls salt intake behavior as well as voluntary water intake to regulate sodium homeostasis. The protein is Sodium/potassium-transporting ATPase subunit alpha-1 (ATP1A1) of Sus scrofa (Pig).